We begin with the raw amino-acid sequence, 142 residues long: Organic hydroperoxide resistance protein-like 2 (142 aa).

This sequence belongs to the OsmC/Ohr family.

The sequence is that of Organic hydroperoxide resistance protein-like 2 from Staphylococcus epidermidis (strain ATCC 12228 / FDA PCI 1200).